We begin with the raw amino-acid sequence, 163 residues long: Nucleotide-binding protein HDEF_1968 (163 aa).

The protein belongs to the YajQ family.

In terms of biological role, nucleotide-binding protein. The sequence is that of Nucleotide-binding protein HDEF_1968 from Hamiltonella defensa subsp. Acyrthosiphon pisum (strain 5AT).